A 348-amino-acid chain; its full sequence is Protein RecA (348 aa).

G66–T73 contributes to the ATP binding site.

It belongs to the RecA family.

The protein localises to the cytoplasm. In terms of biological role, can catalyze the hydrolysis of ATP in the presence of single-stranded DNA, the ATP-dependent uptake of single-stranded DNA by duplex DNA, and the ATP-dependent hybridization of homologous single-stranded DNAs. It interacts with LexA causing its activation and leading to its autocatalytic cleavage. The sequence is that of Protein RecA from Neisseria meningitidis serogroup A / serotype 4A (strain DSM 15465 / Z2491).